The sequence spans 278 residues: Cell division protein FtsQ (278 aa).

The Cytoplasmic portion of the chain corresponds to 1–6 (MNATLR). Residues 7–27 (ILAWLIAVALVALPVVAVLNG) traverse the membrane as a helical segment. At 28–278 (WVGAERWPLA…SPFAIPGFKT (251 aa)) the chain is on the periplasmic side. One can recognise a POTRA domain in the interval 34–103 (WPLARLRVSG…DVLEVHVVEH (70 aa)).

This sequence belongs to the FtsQ/DivIB family. FtsQ subfamily. In terms of assembly, part of a complex composed of FtsB, FtsL and FtsQ.

The protein localises to the cell inner membrane. Essential cell division protein. May link together the upstream cell division proteins, which are predominantly cytoplasmic, with the downstream cell division proteins, which are predominantly periplasmic. May control correct divisome assembly. The sequence is that of Cell division protein FtsQ from Xanthomonas campestris pv. campestris (strain ATCC 33913 / DSM 3586 / NCPPB 528 / LMG 568 / P 25).